We begin with the raw amino-acid sequence, 20 residues long: Fibrinolytic zinc metalloproteinase (20 aa).

Positions 7-20 (RYVQLVITVDHVMN) constitute a Peptidase M12B domain.

Zn(2+) serves as cofactor.

It localises to the secreted. Hydrolyzes alpha and beta chains of human fibrinogen and human fibrin. No activity against the gamma chain of human fibrinogen, human thrombin, bovine serum albumin, ovalbumin and hemoglobin. Has anticoagulant activity on human plasma and protects mice against death due from experimentally induced platelet thromboembolism with an ED(50) of 40 ug/kg. This is Fibrinolytic zinc metalloproteinase from Ganoderma lucidum (Ling zhi medicinal fungus).